The chain runs to 115 residues: Large ribosomal subunit protein bL20 (115 aa).

It belongs to the bacterial ribosomal protein bL20 family.

In terms of biological role, binds directly to 23S ribosomal RNA and is necessary for the in vitro assembly process of the 50S ribosomal subunit. It is not involved in the protein synthesizing functions of that subunit. This Prochlorococcus marinus (strain MIT 9301) protein is Large ribosomal subunit protein bL20.